A 478-amino-acid chain; its full sequence is Putative multidrug resistance outer membrane protein MdtQ (478 aa).

A signal peptide spans methionine 1 to glycine 21. Residue cysteine 22 is the site of N-palmitoyl cysteine attachment. The S-diacylglycerol cysteine moiety is linked to residue cysteine 22.

This sequence belongs to the outer membrane factor (OMF) (TC 1.B.17) family.

The protein resides in the cell outer membrane. Could be involved in resistance to puromycin, acriflavine and tetraphenylarsonium chloride. This Escherichia coli (strain K12) protein is Putative multidrug resistance outer membrane protein MdtQ (mdtQ).